A 372-amino-acid polypeptide reads, in one-letter code: Alpha-1,3-mannosyl-glycoprotein 4-beta-N-acetylglucosaminyltransferase-like protein MGAT4D (372 aa).

Topologically, residues 1–8 (MKTKNVNL) are cytoplasmic. The helical; Signal-anchor for type II membrane protein transmembrane segment at 9–29 (LFALVAVLLFGFSCFCISRMN) threads the bilayer. Residues 30-372 (QTNNQLINCR…REQHLKDHYY (343 aa)) are Lumenal-facing. N-linked (GlcNAc...) asparagine glycosylation is found at Asn54 and Asn143.

Belongs to the glycosyltransferase 54 family. In terms of assembly, may self-associate; specifically in the endoplasmic reticulum prior to its translocation to the Golgi. Interacts with MGAT1, MGAT3 and MAN2A2; may interact with MGTA1 specifically in the Golgi. In terms of processing, N-glycosylated. O-glycosylated; further modified with terminal sialic acid residues. Testis.

It is found in the golgi apparatus membrane. It localises to the endoplasmic reticulum membrane. Functionally, may play a role in male spermatogenesis. In vitro acts as inhibitor of MGAT1 activity causing cell surface proteins to carry mainly high mannose N-glycans. The function is mediated by its lumenal domain and occurs specifically in the Golgi. A catalytic glucosyltransferase activity is not detected. May be involved in regulation of Sertoli-germ cell interactions during specific stages of spermatogenesis. This chain is Alpha-1,3-mannosyl-glycoprotein 4-beta-N-acetylglucosaminyltransferase-like protein MGAT4D, found in Rattus norvegicus (Rat).